Reading from the N-terminus, the 269-residue chain is Phosphatidylglycerol--prolipoprotein diacylglyceryl transferase (269 aa).

The next 3 membrane-spanning stretches (helical) occupy residues 21-41, 54-74, and 88-108; these read WYGI…VLEG, LLLY…VVFE, and IWDG…VILI. A 1,2-diacyl-sn-glycero-3-phospho-(1'-sn-glycerol) is bound at residue arginine 136. Transmembrane regions (helical) follow at residues 206 to 226 and 236 to 256; these read GEVV…IEGM and LRVS…AIFY.

The protein belongs to the Lgt family.

The protein localises to the cell membrane. It catalyses the reaction L-cysteinyl-[prolipoprotein] + a 1,2-diacyl-sn-glycero-3-phospho-(1'-sn-glycerol) = an S-1,2-diacyl-sn-glyceryl-L-cysteinyl-[prolipoprotein] + sn-glycerol 1-phosphate + H(+). The protein operates within protein modification; lipoprotein biosynthesis (diacylglyceryl transfer). Functionally, catalyzes the transfer of the diacylglyceryl group from phosphatidylglycerol to the sulfhydryl group of the N-terminal cysteine of a prolipoprotein, the first step in the formation of mature lipoproteins. This chain is Phosphatidylglycerol--prolipoprotein diacylglyceryl transferase, found in Ligilactobacillus salivarius (strain UCC118) (Lactobacillus salivarius).